Here is a 185-residue protein sequence, read N- to C-terminus: Ribosome-recycling factor (185 aa).

The segment at 137–158 (NQVKKLEKDKEISEDESKKAQE) is disordered. A compositionally biased stretch (basic and acidic residues) spans 140–158 (KKLEKDKEISEDESKKAQE).

It belongs to the RRF family.

It is found in the cytoplasm. In terms of biological role, responsible for the release of ribosomes from messenger RNA at the termination of protein biosynthesis. May increase the efficiency of translation by recycling ribosomes from one round of translation to another. This chain is Ribosome-recycling factor, found in Helicobacter pylori (strain P12).